Consider the following 372-residue polypeptide: 18-hydroxynorfluorocurarine reductase (372 aa).

Residues C47, D50, H69, E70, C100, C103, C106, C114, and C172 each coordinate Zn(2+). NADP(+)-binding positions include 197–202 (GLGGIG), K226, 283–285 (LGA), S307, and R354.

It belongs to the zinc-containing alcohol dehydrogenase family. In terms of assembly, homodimer. The cofactor is Zn(2+). As to expression, mainly expressed in roots.

The catalysed reaction is (19E)-cur-19-en-17-al + NADP(+) = norfluorocurarine + NADPH + H(+). It catalyses the reaction 17,18-epoxy-17-hydroxycur-19-ene + NADP(+) = 18-hydroxynorfluorocurarine + NADPH + H(+). The protein operates within alkaloid biosynthesis. Its function is as follows. Alcohol dehydrogenase involved in the biosynthesis of curare monoterpene indole alkaloids (MIAs), natural products such as strychnine, a neurotoxic compound used as a pesticide to control rodents, and its pharmacologically active derivatives, including brucine, used to regulate blood pressure. Curare alkaloids act as animal glycine receptor antagonists. Catalyzes the conversion of norfluorocurarine to desoxy Wieland-Gumlich aldehyde, and of 18-OH norfluorocurarine to Wieland-Gumlich aldehyde. The protein is 18-hydroxynorfluorocurarine reductase of Strychnos nux-vomica (Poison nut).